The sequence spans 810 residues: Phenylalanine--tRNA ligase beta subunit (810 aa).

The tRNA-binding domain occupies R39 to G150. The 89-residue stretch at R407–E495 folds into the B5 domain. The Mg(2+) site is built by D473, D479, E482, and E483. An FDX-ACB domain is found at S716 to R809.

The protein belongs to the phenylalanyl-tRNA synthetase beta subunit family. Type 1 subfamily. In terms of assembly, tetramer of two alpha and two beta subunits. It depends on Mg(2+) as a cofactor.

The protein resides in the cytoplasm. The enzyme catalyses tRNA(Phe) + L-phenylalanine + ATP = L-phenylalanyl-tRNA(Phe) + AMP + diphosphate + H(+). The chain is Phenylalanine--tRNA ligase beta subunit (pheT) from Synechocystis sp. (strain ATCC 27184 / PCC 6803 / Kazusa).